The primary structure comprises 256 residues: DNA repair protein RecO (256 aa).

The protein belongs to the RecO family.

Its function is as follows. Involved in DNA repair and RecF pathway recombination. This Bartonella henselae (strain ATCC 49882 / DSM 28221 / CCUG 30454 / Houston 1) (Rochalimaea henselae) protein is DNA repair protein RecO.